A 547-amino-acid polypeptide reads, in one-letter code: Large cysteine-rich periplasmic protein OmcB (547 aa).

A signal peptide spans 1–22; the sequence is MNKLIRRAVTIFAVTSVASLFA. Residues 45-84 are disordered; that stretch reads KAKDNTSHKSKKARKNHSKETPVNRKKVAPVHESKATGPK. Over residues 52-61 the composition is skewed to basic residues; it reads HKSKKARKNH.

As to quaternary structure, part of a disulfide cross-linked outer membrane complex (COMC) composed of the major outer membrane porin (MOMP), the small cysteine-rich protein (OmcA) and the large cysteine-rich periplasmic protein (OmcB).

The protein resides in the periplasm. In terms of biological role, in elementary bodies (EBs, the infectious stage, which is able to survive outside the host cell) provides the structural integrity of the outer envelope through disulfide cross-links with the small cysteine-rich protein and the major outer membrane protein. It has been described in publications as the Sarkosyl-insoluble COMC (Chlamydia outer membrane complex), and serves as the functional equivalent of peptidoglycan. The protein is Large cysteine-rich periplasmic protein OmcB (omcB) of Chlamydia trachomatis serovar L2 (strain ATCC VR-902B / DSM 19102 / 434/Bu).